The sequence spans 47 residues: UPF0391 membrane protein rrnAC2507 (47 aa).

Helical transmembrane passes span 5–25 (VVLVILAVVAGIAGFRGIAGL) and 27–47 (FRVAKFLIVIFLVLALVTFLL).

Belongs to the UPF0391 family.

The protein localises to the cell membrane. The chain is UPF0391 membrane protein rrnAC2507 from Haloarcula marismortui (strain ATCC 43049 / DSM 3752 / JCM 8966 / VKM B-1809) (Halobacterium marismortui).